The primary structure comprises 324 residues: Non-homologous end joining protein Ku 1 (324 aa).

Positions 10–193 constitute a Ku domain; sequence INFGLVTIPV…AKPSDKEIQM (184 aa). Residues 256–324 form a disordered region; it reads QARRGRGGQV…SGGRRRRRAS (69 aa). Residues 281–292 are compositionally biased toward basic and acidic residues; that stretch reads AELDKKAKELGI.

It belongs to the prokaryotic Ku family. In terms of assembly, homodimer. Interacts with LigD.

Its function is as follows. With LigD forms a non-homologous end joining (NHEJ) DNA repair enzyme, which repairs dsDNA breaks with reduced fidelity. Binds linear dsDNA with 5'- and 3'- overhangs but not closed circular dsDNA nor ssDNA. Recruits and stimulates the ligase activity of LigD. This chain is Non-homologous end joining protein Ku 1, found in Saccharopolyspora erythraea (strain ATCC 11635 / DSM 40517 / JCM 4748 / NBRC 13426 / NCIMB 8594 / NRRL 2338).